The chain runs to 121 residues: Small ribosomal subunit protein uS13 (121 aa).

A disordered region spans residues 97 to 121; sequence VRGQRTRTNARTRRGARKTVAGRKK. Residues 100–121 show a composition bias toward basic residues; it reads QRTRTNARTRRGARKTVAGRKK.

It belongs to the universal ribosomal protein uS13 family. In terms of assembly, part of the 30S ribosomal subunit. Forms a loose heterodimer with protein S19. Forms two bridges to the 50S subunit in the 70S ribosome.

Functionally, located at the top of the head of the 30S subunit, it contacts several helices of the 16S rRNA. In the 70S ribosome it contacts the 23S rRNA (bridge B1a) and protein L5 of the 50S subunit (bridge B1b), connecting the 2 subunits; these bridges are implicated in subunit movement. Contacts the tRNAs in the A and P-sites. The chain is Small ribosomal subunit protein uS13 from Prochlorococcus marinus (strain NATL1A).